The chain runs to 89 residues: Small ribosomal subunit protein uS15 (89 aa).

The protein belongs to the universal ribosomal protein uS15 family. As to quaternary structure, part of the 30S ribosomal subunit. Forms a bridge to the 50S subunit in the 70S ribosome, contacting the 23S rRNA.

In terms of biological role, one of the primary rRNA binding proteins, it binds directly to 16S rRNA where it helps nucleate assembly of the platform of the 30S subunit by binding and bridging several RNA helices of the 16S rRNA. Functionally, forms an intersubunit bridge (bridge B4) with the 23S rRNA of the 50S subunit in the ribosome. The polypeptide is Small ribosomal subunit protein uS15 (Acidothermus cellulolyticus (strain ATCC 43068 / DSM 8971 / 11B)).